The following is a 449-amino-acid chain: MPLPLGDPLALAVSPQLGYIRITAMPRWLQLPGMSALGILYSLTRVFGLMATANWSPRGIKRVRQSLYLRIHGCVMLIFVGCFSPFAFWCIFQRMAFLRQNRILLMIGFNRYVLLLVCAFMTLWIHCFKQAEIIGCLNRLLKCRRRLRRLMHTRKLKDSMDCLATKGHLLEVVVLLSSYLLSMAQPIQILKDDPEVRRNFMYACSLVFVSVCQAILQLSLGMYTMAILFLGHLVRHSNLLLAKILADAEHIFESSQKAGFWPNRQELYKGQQKWLALELWRLLHVHHQLLKLHRSICSLCAVQAVCFLGFVPLECTIHLFFTYFMKYSKFILRKYGRSFPLNYFAIAFLVGLFTNLLLVILPTYYSERRFNCTREIIKGGGLAFPSRITVKQLRHTMHFYGLYLKNVEHVFAVSACGLFKLNNAILFCIVGAILEYLMILIQFDKVLNK.

The Cytoplasmic segment spans residues 1-27 (MPLPLGDPLALAVSPQLGYIRITAMPR). Residues 28–50 (WLQLPGMSALGILYSLTRVFGLM) form a helical membrane-spanning segment. Residues 51 to 70 (ATANWSPRGIKRVRQSLYLR) are Extracellular-facing. Residues 71–93 (IHGCVMLIFVGCFSPFAFWCIFQ) form a helical membrane-spanning segment. Residues 94–102 (RMAFLRQNR) lie on the Cytoplasmic side of the membrane. The helical transmembrane segment at 103-125 (ILLMIGFNRYVLLLVCAFMTLWI) threads the bilayer. Residues 126 to 205 (HCFKQAEIIG…VRRNFMYACS (80 aa)) lie on the Extracellular side of the membrane. A helical membrane pass occupies residues 206 to 228 (LVFVSVCQAILQLSLGMYTMAIL). Topologically, residues 229–298 (FLGHLVRHSN…LLKLHRSICS (70 aa)) are cytoplasmic. The helical transmembrane segment at 299-321 (LCAVQAVCFLGFVPLECTIHLFF) threads the bilayer. The Extracellular portion of the chain corresponds to 322–340 (TYFMKYSKFILRKYGRSFP). A helical transmembrane segment spans residues 341 to 363 (LNYFAIAFLVGLFTNLLLVILPT). Residues 364-420 (YYSERRFNCTREIIKGGGLAFPSRITVKQLRHTMHFYGLYLKNVEHVFAVSACGLFK) lie on the Cytoplasmic side of the membrane. Residues 421–443 (LNNAILFCIVGAILEYLMILIQF) form a helical membrane-spanning segment. Over 444-449 (DKVLNK) the chain is Extracellular.

Belongs to the insect chemoreceptor superfamily. Gustatory receptor (GR) family. Gr77a subfamily. As to expression, in larvae, is expressed in dorsal pharyngeal sense organ.

The protein resides in the cell membrane. Probable gustatory receptor which mediates acceptance or avoidance behavior, depending on its substrates. The polypeptide is Putative gustatory receptor 77a (Gr77a) (Drosophila melanogaster (Fruit fly)).